Consider the following 315-residue polypeptide: 4-hydroxy-3-methylbut-2-enyl diphosphate reductase (315 aa).

Residue Cys12 coordinates [4Fe-4S] cluster. (2E)-4-hydroxy-3-methylbut-2-enyl diphosphate is bound by residues His41 and His74. The dimethylallyl diphosphate site is built by His41 and His74. The isopentenyl diphosphate site is built by His41 and His74. Residue Cys96 coordinates [4Fe-4S] cluster. His124 contacts (2E)-4-hydroxy-3-methylbut-2-enyl diphosphate. His124 contacts dimethylallyl diphosphate. His124 lines the isopentenyl diphosphate pocket. The active-site Proton donor is the Glu126. Thr167 provides a ligand contact to (2E)-4-hydroxy-3-methylbut-2-enyl diphosphate. Cys197 lines the [4Fe-4S] cluster pocket. (2E)-4-hydroxy-3-methylbut-2-enyl diphosphate-binding residues include Ser225, Ser226, Asn227, and Ser269. Residues Ser225, Ser226, Asn227, and Ser269 each contribute to the dimethylallyl diphosphate site. Residues Ser225, Ser226, Asn227, and Ser269 each contribute to the isopentenyl diphosphate site.

This sequence belongs to the IspH family. As to quaternary structure, homodimer. [4Fe-4S] cluster serves as cofactor.

The catalysed reaction is isopentenyl diphosphate + 2 oxidized [2Fe-2S]-[ferredoxin] + H2O = (2E)-4-hydroxy-3-methylbut-2-enyl diphosphate + 2 reduced [2Fe-2S]-[ferredoxin] + 2 H(+). It carries out the reaction dimethylallyl diphosphate + 2 oxidized [2Fe-2S]-[ferredoxin] + H2O = (2E)-4-hydroxy-3-methylbut-2-enyl diphosphate + 2 reduced [2Fe-2S]-[ferredoxin] + 2 H(+). The protein operates within isoprenoid biosynthesis; dimethylallyl diphosphate biosynthesis; dimethylallyl diphosphate from (2E)-4-hydroxy-3-methylbutenyl diphosphate: step 1/1. Its pathway is isoprenoid biosynthesis; isopentenyl diphosphate biosynthesis via DXP pathway; isopentenyl diphosphate from 1-deoxy-D-xylulose 5-phosphate: step 6/6. Catalyzes the conversion of 1-hydroxy-2-methyl-2-(E)-butenyl 4-diphosphate (HMBPP) into a mixture of isopentenyl diphosphate (IPP) and dimethylallyl diphosphate (DMAPP). Acts in the terminal step of the DOXP/MEP pathway for isoprenoid precursor biosynthesis. The polypeptide is 4-hydroxy-3-methylbut-2-enyl diphosphate reductase (Wigglesworthia glossinidia brevipalpis).